A 103-amino-acid polypeptide reads, in one-letter code: Small ribosomal subunit protein uS10 (103 aa).

This sequence belongs to the universal ribosomal protein uS10 family. As to quaternary structure, part of the 30S ribosomal subunit.

Involved in the binding of tRNA to the ribosomes. The chain is Small ribosomal subunit protein uS10 from Pelodictyon phaeoclathratiforme (strain DSM 5477 / BU-1).